The sequence spans 605 residues: Elongation factor 4 (605 aa).

One can recognise a tr-type G domain in the interval 9–192; the sequence is HHIRNFCIIA…AIVKRVPAPS (184 aa). GTP contacts are provided by residues 21-26 and 139-142; these read DHGKST and NKID.

The protein belongs to the TRAFAC class translation factor GTPase superfamily. Classic translation factor GTPase family. LepA subfamily.

Its subcellular location is the cell inner membrane. It carries out the reaction GTP + H2O = GDP + phosphate + H(+). Required for accurate and efficient protein synthesis under certain stress conditions. May act as a fidelity factor of the translation reaction, by catalyzing a one-codon backward translocation of tRNAs on improperly translocated ribosomes. Back-translocation proceeds from a post-translocation (POST) complex to a pre-translocation (PRE) complex, thus giving elongation factor G a second chance to translocate the tRNAs correctly. Binds to ribosomes in a GTP-dependent manner. This chain is Elongation factor 4, found in Chlorobium phaeobacteroides (strain DSM 266 / SMG 266 / 2430).